The primary structure comprises 514 residues: Beta-glucosidase 21 (514 aa).

An N-terminal signal peptide occupies residues 1 to 25; the sequence is MERPLHLLLVFLSSPWLLLLQGVSS. 2 residues coordinate a beta-D-glucoside: Q47 and H147. The active-site Proton donor is the E193. C212 and C220 form a disulfide bridge. N-linked (GlcNAc...) asparagine glycans are attached at residues N219 and N224. 2 residues coordinate a beta-D-glucoside: Y336 and E406. Catalysis depends on E406, which acts as the Nucleophile. An N-linked (GlcNAc...) asparagine glycan is attached at N407. Residues W448 and F465 each contribute to the a beta-D-glucoside site. Residue N494 is glycosylated (N-linked (GlcNAc...) asparagine).

This sequence belongs to the glycosyl hydrolase 1 family.

It carries out the reaction Hydrolysis of terminal, non-reducing beta-D-glucosyl residues with release of beta-D-glucose.. The chain is Beta-glucosidase 21 (BGLU21) from Oryza sativa subsp. japonica (Rice).